Here is a 295-residue protein sequence, read N- to C-terminus: Ethanolamine ammonia-lyase small subunit (295 aa).

2 residues coordinate adenosylcob(III)alamin: valine 208 and glutamate 229.

This sequence belongs to the EutC family. The basic unit is a heterodimer which dimerizes to form tetramers. The heterotetramers trimerize; 6 large subunits form a core ring with 6 small subunits projecting outwards. Requires adenosylcob(III)alamin as cofactor.

Its subcellular location is the bacterial microcompartment. It carries out the reaction ethanolamine = acetaldehyde + NH4(+). It participates in amine and polyamine degradation; ethanolamine degradation. In terms of biological role, catalyzes the deamination of various vicinal amino-alcohols to oxo compounds. Allows this organism to utilize ethanolamine as the sole source of nitrogen and carbon in the presence of external vitamin B12. This chain is Ethanolamine ammonia-lyase small subunit, found in Fusobacterium nucleatum subsp. nucleatum (strain ATCC 25586 / DSM 15643 / BCRC 10681 / CIP 101130 / JCM 8532 / KCTC 2640 / LMG 13131 / VPI 4355).